The following is a 245-amino-acid chain: Pyridoxine 5'-phosphate synthase (245 aa).

Asn-7 contributes to the 3-amino-2-oxopropyl phosphate binding site. 9–10 (DH) contributes to the 1-deoxy-D-xylulose 5-phosphate binding site. Residue Arg-18 participates in 3-amino-2-oxopropyl phosphate binding. His-43 functions as the Proton acceptor in the catalytic mechanism. 1-deoxy-D-xylulose 5-phosphate is bound by residues Arg-45 and His-50. The active-site Proton acceptor is the Glu-70. Thr-100 is a binding site for 1-deoxy-D-xylulose 5-phosphate. Catalysis depends on His-190, which acts as the Proton donor. 3-amino-2-oxopropyl phosphate-binding positions include Gly-191 and 212–213 (GH).

The protein belongs to the PNP synthase family. As to quaternary structure, homooctamer; tetramer of dimers.

Its subcellular location is the cytoplasm. It catalyses the reaction 3-amino-2-oxopropyl phosphate + 1-deoxy-D-xylulose 5-phosphate = pyridoxine 5'-phosphate + phosphate + 2 H2O + H(+). It participates in cofactor biosynthesis; pyridoxine 5'-phosphate biosynthesis; pyridoxine 5'-phosphate from D-erythrose 4-phosphate: step 5/5. Catalyzes the complicated ring closure reaction between the two acyclic compounds 1-deoxy-D-xylulose-5-phosphate (DXP) and 3-amino-2-oxopropyl phosphate (1-amino-acetone-3-phosphate or AAP) to form pyridoxine 5'-phosphate (PNP) and inorganic phosphate. In Prochlorococcus marinus (strain NATL1A), this protein is Pyridoxine 5'-phosphate synthase.